The chain runs to 145 residues: Deoxyuridine 5'-triphosphate nucleotidohydrolase (145 aa).

Residues 65–67 (RSG), Asn-78, 82–84 (TID), and Lys-92 each bind substrate.

This sequence belongs to the dUTPase family. The cofactor is Mg(2+).

It catalyses the reaction dUTP + H2O = dUMP + diphosphate + H(+). The protein operates within pyrimidine metabolism; dUMP biosynthesis; dUMP from dCTP (dUTP route): step 2/2. This enzyme is involved in nucleotide metabolism: it produces dUMP, the immediate precursor of thymidine nucleotides and it decreases the intracellular concentration of dUTP so that uracil cannot be incorporated into DNA. In Syntrophomonas wolfei subsp. wolfei (strain DSM 2245B / Goettingen), this protein is Deoxyuridine 5'-triphosphate nucleotidohydrolase.